A 355-amino-acid chain; its full sequence is UDP-3-O-acylglucosamine N-acyltransferase (355 aa).

His-248 functions as the Proton acceptor in the catalytic mechanism.

It belongs to the transferase hexapeptide repeat family. LpxD subfamily. As to quaternary structure, homotrimer.

The catalysed reaction is a UDP-3-O-[(3R)-3-hydroxyacyl]-alpha-D-glucosamine + a (3R)-hydroxyacyl-[ACP] = a UDP-2-N,3-O-bis[(3R)-3-hydroxyacyl]-alpha-D-glucosamine + holo-[ACP] + H(+). Its pathway is bacterial outer membrane biogenesis; LPS lipid A biosynthesis. Functionally, catalyzes the N-acylation of UDP-3-O-acylglucosamine using 3-hydroxyacyl-ACP as the acyl donor. Is involved in the biosynthesis of lipid A, a phosphorylated glycolipid that anchors the lipopolysaccharide to the outer membrane of the cell. This is UDP-3-O-acylglucosamine N-acyltransferase from Syntrophobacter fumaroxidans (strain DSM 10017 / MPOB).